A 362-amino-acid chain; its full sequence is Chemerin-like receptor 1 (362 aa).

Residues 1–37 (MEAEDYNASYEDYPDDVDPIVVLEELSPLEGRVVRIL) lie on the Extracellular side of the membrane. Residue asparagine 7 is glycosylated (N-linked (GlcNAc...) asparagine). Residues 38 to 58 (LVAVYSVICLLGILGNGLVIV) form a helical membrane-spanning segment. Residues 59–70 (MITCKMKRTVNT) lie on the Cytoplasmic side of the membrane. The chain crosses the membrane as a helical span at residues 71–91 (VWFLNLAVADFLFNVFLPVHI). Residues 92-108 (AYAALDYHWVFGTAMCK) lie on the Extracellular side of the membrane. A disulfide bridge links cysteine 107 with cysteine 184. A helical transmembrane segment spans residues 109-129 (ISNFLLIHNMFTSVFLLTVIS). Over 130–151 (FDRCVSVLLPVWSQNHRSVRLA) the chain is Cytoplasmic. The chain crosses the membrane as a helical span at residues 152–172 (YTACLVIWVLAFFLSSPSLVF). The Extracellular segment spans residues 173–219 (RDTARLHGKISCFNNFSLSAAVSSPWPAHPQVDPVGSGRHKVVTITR). Asparagine 187 carries N-linked (GlcNAc...) asparagine glycosylation. Residues 220 to 240 (FLCGFLVPGLITTACYLTIVY) traverse the membrane as a helical segment. Over 241-255 (KLQRSRLAKTKKPFK) the chain is Cytoplasmic. A helical membrane pass occupies residues 256–276 (IILTIIVTFFLCWCPYHAFYL). The Extracellular segment spans residues 277-281 (LELRR). Residues 282 to 302 (GSVPPSVFSLGVPLATAIAIA) form a helical membrane-spanning segment. Topologically, residues 303–362 (NSCMNPILYVFMGQDFKKFRVALFSRLVNALSEDTGHSSYPSHRSFTKMSSMNERETGML) are cytoplasmic. Serine 334 carries the phosphoserine modification. Positions 336 to 362 (DTGHSSYPSHRSFTKMSSMNERETGML) are disordered. Residue threonine 337 is modified to Phosphothreonine. Over residues 339-354 (HSSYPSHRSFTKMSSM) the composition is skewed to polar residues. Serine 344, serine 347, and serine 353 each carry phosphoserine.

The protein belongs to the chemokine-like receptor (CMKLR) family. As to expression, widely expressed in several tissues including adipose, muscle, liver and brain.

Its subcellular location is the cell membrane. Receptor for the chemoattractant adipokine chemerin/RARRES2 and for the omega-3 fatty acid derived molecule resolvin E1. Interaction with RARRES2 initiates activation of G proteins G(i)/G(o) and beta-arrestin pathways inducing cellular responses via second messenger pathways such as intracellular calcium mobilization, phosphorylation of MAP kinases MAPK1/MAPK3 (ERK1/2), TYRO3, MAPK14/P38MAPK and PI3K leading to multifunctional effects, like, reduction of immune responses, enhancing of adipogenesis and angionesis. Resolvin E1 down-regulates cytokine production in macrophages by reducing the activation of MAPK1/3 (ERK1/2) and NF-kappa-B. Positively regulates adipogenesis and adipocyte metabolism. The sequence is that of Chemerin-like receptor 1 (CMLKR1) from Bos taurus (Bovine).